The primary structure comprises 128 residues: Leucine-rich single-pass membrane protein 1 (128 aa).

Position 24 is a phosphoserine (Ser24). A helical membrane pass occupies residues 66–86 (GLLLVLTVSLALVFFAIFLII). Positions 90–111 (NQMEDVSRRLTAEGKDIDDLKK) form a coiled coil.

Its subcellular location is the membrane. The protein is Leucine-rich single-pass membrane protein 1 (Lsmem1) of Mus musculus (Mouse).